A 471-amino-acid chain; its full sequence is GTPase Der (471 aa).

EngA-type G domains follow at residues 3 to 168 and 178 to 353; these read PIVA…PDLS and VRVA…ANHA. Residues 9–16, 56–60, 120–123, 184–191, 231–235, and 296–299 contribute to the GTP site; these read GRPNVGKS, DTGGI, NKVE, DTAGM, and NKWD. One can recognise a KH-like domain in the interval 354 to 438; it reads RRISTRELND…PINLYFRTRE (85 aa).

This sequence belongs to the TRAFAC class TrmE-Era-EngA-EngB-Septin-like GTPase superfamily. EngA (Der) GTPase family. In terms of assembly, associates with the 50S ribosomal subunit.

GTPase that plays an essential role in the late steps of ribosome biogenesis. The sequence is that of GTPase Der from Symbiobacterium thermophilum (strain DSM 24528 / JCM 14929 / IAM 14863 / T).